We begin with the raw amino-acid sequence, 755 residues long: Primary amine oxidase (755 aa).

The signal sequence occupies residues 1–30; it reads MANGLKFSPRKTALALAVAVVCAWQSPVFA. Substrate contacts are provided by residues 411 to 422 and 493 to 498; these read YLDSGDYGMGTL and VGNYDY. The active-site Proton acceptor is the Asp413. Tyr496 functions as the Schiff-base intermediate with substrate; via topaquinone in the catalytic mechanism. Tyr496 is subject to 2',4',5'-topaquinone. Cu cation-binding residues include His554 and His556. Residues Asp563, Leu564, Asp565, Glu603, Tyr697, Asp700, Glu702, and Asp708 each coordinate Ca(2+). Asp563 contributes to the Mn(2+) binding site. Asp565 provides a ligand contact to Mn(2+). Asp708 is a Mn(2+) binding site. His719 contributes to the Cu cation binding site.

It belongs to the copper/topaquinone oxidase family. As to quaternary structure, homodimer. The cofactor is Cu cation. Zn(2+) is required as a cofactor. It depends on Ca(2+) as a cofactor. L-topaquinone serves as cofactor. Requires Mn(2+) as cofactor. In terms of processing, topaquinone (TPQ) is generated by copper-dependent autoxidation of a specific tyrosyl residue.

It localises to the periplasm. The enzyme catalyses a primary methyl amine + O2 + H2O = an aldehyde + H2O2 + NH4(+). Its function is as follows. Active on tyramine, tryptamine, beta-phenethylamine and dopamine. This chain is Primary amine oxidase (maoA), found in Klebsiella aerogenes (Enterobacter aerogenes).